Consider the following 83-residue polypeptide: High-potential iron-sulfur protein (83 aa).

4 residues coordinate [4Fe-4S] cluster: Cys-43, Cys-46, Cys-61, and Cys-75.

Belongs to the high-potential iron-sulfur protein (HiPIP) family. Homodimer.

It localises to the periplasm. Specific class of high-redox-potential 4Fe-4S ferredoxins. Functions in anaerobic electron transport in most purple and in some other photosynthetic bacteria and in at least one genus (Paracoccus) of halophilic, denitrifying bacteria. The sequence is that of High-potential iron-sulfur protein from Thiocystis violacea.